A 59-amino-acid polypeptide reads, in one-letter code: uncharacterized protein (59 aa).

This is an uncharacterized protein from Archaeoglobus fulgidus (strain ATCC 49558 / DSM 4304 / JCM 9628 / NBRC 100126 / VC-16).